Here is a 110-residue protein sequence, read N- to C-terminus: MIRNVLLAFMICSGMTLLGGCSSVMSHTGGKEGTYPGTRASATMIGDDETNWGTKSLAILDMPFTAVMDTLLLPWDVFRKDSSVRSRVEKSEANAQATNAVIPPARMPDN.

The N-terminal stretch at M1 to S26 is a signal peptide. The disordered stretch occupies residues R87–N110.

The protein to E.coli YceK.

This is an uncharacterized protein from Escherichia coli (strain K12).